The following is a 1241-amino-acid chain: Interphotoreceptor matrix proteoglycan 2 (1241 aa).

A signal peptide spans 1–28 (MIMFLPLGRISLGILILFLTGGNLVSVS). Over 29 to 1104 (EEIQDRMHAV…CEEFVSEPFV (1076 aa)) the chain is Extracellular. O-linked (GalNAc...) threonine glycosylation is present at Thr193. The segment at 206 to 234 (AASERSAASPQESISNEIENVTEQPTPPA) is disordered. A compositionally biased stretch (polar residues) spans 211-229 (SAASPQESISNEIENVTEQ). The N-linked (GlcNAc...) asparagine glycan is linked to Asn225. O-linked (GalNAc...) threonine glycosylation occurs at Thr231. Residues 235–349 (AEQIAEFSIQ…KPTAVYTISN (115 aa)) enclose the SEA 1 domain. The segment at 255-263 (RDPSSALYR) is hyaluronan-binding motif involved in chondroitin sulfate A-binding. Residues Asn297, Asn316, and Asn366 are each glycosylated (N-linked (GlcNAc...) asparagine). Thr429, Thr430, and Thr431 each carry an O-linked (GalNAc...) threonine glycan. Low complexity predominate over residues 431–443 (TISPFGFSSGPPS). 2 disordered regions span residues 431–456 (TISP…STLG) and 500–520 (VAPE…TEES). A glycan (O-linked (GalNAc...) threonine) is linked at Thr817. Asn841, Asn945, and Asn959 each carry an N-linked (GlcNAc...) asparagine glycan. Positions 900 to 1013 (GALVVFFSLR…YSLDVESGDD (114 aa)) constitute an SEA 2 domain. EGF-like domains lie at 1013 to 1054 (DANP…LPCQ) and 1055 to 1096 (SVCD…QHCE). 6 cysteine pairs are disulfide-bonded: Cys1017–Cys1028, Cys1022–Cys1039, Cys1041–Cys1053, Cys1057–Cys1070, Cys1064–Cys1080, and Cys1082–Cys1095. A hyaluronan-binding motif involved in chondroitin sulfate C-binding region spans residues 1083–1091 (RVGSNWWYR). A helical membrane pass occupies residues 1105–1125 (IGITIASVVSLLLVASAVVFF). Topologically, residues 1126–1241 (LAKMLQAQNV…FVREHEMEEL (116 aa)) are cytoplasmic. The tract at residues 1128-1136 (KMLQAQNVR) is hyaluronan-binding motif involved in chondroitin sulfate A- and C-binding. Residues 1139–1145 (RQRPTNR) form a hyaluronan-binding motif involved in chondroitin sulfate C-binding region. The interval 1210-1218 (KEEIQERMR) is hyaluronan-binding motif involved in chondroitin sulfate A- and C-binding motif.

Expressed in the pineal gland and the outer layer of the retina.

It is found in the photoreceptor outer segment membrane. The protein localises to the photoreceptor inner segment membrane. The protein resides in the secreted. It localises to the extracellular space. Its subcellular location is the extracellular matrix. It is found in the interphotoreceptor matrix. In terms of biological role, chondroitin sulfate- and hyaluronan-binding proteoglycan involved in the organization of interphotoreceptor matrix; may participate in the maturation and maintenance of the light-sensitive photoreceptor outer segment. Binds heparin. This chain is Interphotoreceptor matrix proteoglycan 2 (Impg2), found in Rattus norvegicus (Rat).